The following is a 273-amino-acid chain: Thymidylate synthase (273 aa).

Arginine 31 serves as a coordination point for dUMP. Histidine 61 lines the (6R)-5,10-methylene-5,6,7,8-tetrahydrofolate pocket. 136–137 (RR) provides a ligand contact to dUMP. Cysteine 156 functions as the Nucleophile in the catalytic mechanism. Residues 176 to 179 (RSAD), asparagine 187, and 217 to 219 (HIY) each bind dUMP. Aspartate 179 is a (6R)-5,10-methylene-5,6,7,8-tetrahydrofolate binding site. Alanine 272 is a binding site for (6R)-5,10-methylene-5,6,7,8-tetrahydrofolate.

This sequence belongs to the thymidylate synthase family. Bacterial-type ThyA subfamily. In terms of assembly, homodimer.

It localises to the cytoplasm. It catalyses the reaction dUMP + (6R)-5,10-methylene-5,6,7,8-tetrahydrofolate = 7,8-dihydrofolate + dTMP. Its pathway is pyrimidine metabolism; dTTP biosynthesis. In terms of biological role, catalyzes the reductive methylation of 2'-deoxyuridine-5'-monophosphate (dUMP) to 2'-deoxythymidine-5'-monophosphate (dTMP) while utilizing 5,10-methylenetetrahydrofolate (mTHF) as the methyl donor and reductant in the reaction, yielding dihydrofolate (DHF) as a by-product. This enzymatic reaction provides an intracellular de novo source of dTMP, an essential precursor for DNA biosynthesis. The polypeptide is Thymidylate synthase (Corynebacterium jeikeium (strain K411)).